We begin with the raw amino-acid sequence, 383 residues long: L-lactate dehydrogenase (383 aa).

The region spanning 1–380 is the FMN hydroxy acid dehydrogenase domain; that stretch reads MIISSGNDYR…NTDCLVQAIK (380 aa). Y24 is a substrate binding site. FMN is bound by residues S106 and Q127. Substrate is bound at residue Y129. Position 155 (T155) interacts with FMN. R164 is a substrate binding site. K251 contributes to the FMN binding site. Catalysis depends on H275, which acts as the Proton acceptor. A substrate-binding site is contributed by R278. 306–330 lines the FMN pocket; it reads DSGIRNGLDVVRMLALGADTVLLGR.

Belongs to the FMN-dependent alpha-hydroxy acid dehydrogenase family. It depends on FMN as a cofactor.

It is found in the cell inner membrane. The enzyme catalyses (S)-lactate + A = pyruvate + AH2. Functionally, catalyzes the conversion of L-lactate to pyruvate. Is coupled to the respiratory chain. The chain is L-lactate dehydrogenase from Acinetobacter baumannii (strain SDF).